Reading from the N-terminus, the 355-residue chain is UDP-N-acetylglucosamine--N-acetylmuramyl-(pentapeptide) pyrophosphoryl-undecaprenol N-acetylglucosamine transferase (355 aa).

UDP-N-acetyl-alpha-D-glucosamine is bound by residues 15-17, Asn127, Arg163, Ser191, Ile244, 263-268, and Gln288; these read TGG and ALTVSE.

Belongs to the glycosyltransferase 28 family. MurG subfamily.

Its subcellular location is the cell inner membrane. It catalyses the reaction di-trans,octa-cis-undecaprenyl diphospho-N-acetyl-alpha-D-muramoyl-L-alanyl-D-glutamyl-meso-2,6-diaminopimeloyl-D-alanyl-D-alanine + UDP-N-acetyl-alpha-D-glucosamine = di-trans,octa-cis-undecaprenyl diphospho-[N-acetyl-alpha-D-glucosaminyl-(1-&gt;4)]-N-acetyl-alpha-D-muramoyl-L-alanyl-D-glutamyl-meso-2,6-diaminopimeloyl-D-alanyl-D-alanine + UDP + H(+). The protein operates within cell wall biogenesis; peptidoglycan biosynthesis. In terms of biological role, cell wall formation. Catalyzes the transfer of a GlcNAc subunit on undecaprenyl-pyrophosphoryl-MurNAc-pentapeptide (lipid intermediate I) to form undecaprenyl-pyrophosphoryl-MurNAc-(pentapeptide)GlcNAc (lipid intermediate II). This chain is UDP-N-acetylglucosamine--N-acetylmuramyl-(pentapeptide) pyrophosphoryl-undecaprenol N-acetylglucosamine transferase, found in Photorhabdus laumondii subsp. laumondii (strain DSM 15139 / CIP 105565 / TT01) (Photorhabdus luminescens subsp. laumondii).